The sequence spans 555 residues: Phosphoglucomutase (555 aa).

Alpha-D-glucose 1,6-bisphosphate contacts are provided by Arg22 and Ser114. Ser114 (phosphoserine intermediate) is an active-site residue. Mg(2+) is bound by residues Ser114, Asp279, Asp281, and Asp283. Ser114 is modified (phosphoserine). Asp283, Arg284, Thr347, Glu366, Ser368, and Lys379 together coordinate alpha-D-glucose 1,6-bisphosphate.

The protein belongs to the phosphohexose mutase family. Monomer. Mg(2+) is required as a cofactor.

It localises to the cytoplasm. It catalyses the reaction alpha-D-glucose 1-phosphate = alpha-D-glucose 6-phosphate. The catalysed reaction is O-phospho-L-seryl-[protein] + alpha-D-glucose 1-phosphate = alpha-D-glucose 1,6-bisphosphate + L-seryl-[protein]. The enzyme catalyses alpha-D-glucose 1,6-bisphosphate + L-seryl-[protein] = O-phospho-L-seryl-[protein] + alpha-D-glucose 6-phosphate. Its function is as follows. Catalyzes the reversible isomerization of alpha-D-glucose 1-phosphate to alpha-D-glucose 6-phosphate. The mechanism proceeds via the intermediate compound alpha-D-glucose 1,6-bisphosphate. Key enzyme in hexose metabolism. The reverse reaction is an essential step for biosynthesis because glucose 1-phosphate is the starting point for the synthesis of UDP-glucose, which acts as a precursor for the synthesis of oligosaccharides and trehalose. In Aspergillus fumigatus (strain ATCC MYA-4609 / CBS 101355 / FGSC A1100 / Af293) (Neosartorya fumigata), this protein is Phosphoglucomutase (pgmA).